The sequence spans 377 residues: Citrate synthase (377 aa).

Catalysis depends on residues H258 and D313.

The protein belongs to the citrate synthase family. Homodimer. Post-translationally, the N-terminus is blocked by acetylation.

The enzyme catalyses oxaloacetate + acetyl-CoA + H2O = citrate + CoA + H(+). Its pathway is carbohydrate metabolism; tricarboxylic acid cycle; isocitrate from oxaloacetate: step 1/2. Its activity is regulated as follows. Allosterically inhibited by NADH. The chain is Citrate synthase (gltA) from Saccharolobus solfataricus (strain ATCC 35092 / DSM 1617 / JCM 11322 / P2) (Sulfolobus solfataricus).